Reading from the N-terminus, the 157-residue chain is SsrA-binding protein (157 aa).

Over residues lysine 136 to arginine 151 the composition is skewed to basic and acidic residues. The tract at residues lysine 136 to glycine 157 is disordered.

This sequence belongs to the SmpB family.

The protein localises to the cytoplasm. Its function is as follows. Required for rescue of stalled ribosomes mediated by trans-translation. Binds to transfer-messenger RNA (tmRNA), required for stable association of tmRNA with ribosomes. tmRNA and SmpB together mimic tRNA shape, replacing the anticodon stem-loop with SmpB. tmRNA is encoded by the ssrA gene; the 2 termini fold to resemble tRNA(Ala) and it encodes a 'tag peptide', a short internal open reading frame. During trans-translation Ala-aminoacylated tmRNA acts like a tRNA, entering the A-site of stalled ribosomes, displacing the stalled mRNA. The ribosome then switches to translate the ORF on the tmRNA; the nascent peptide is terminated with the 'tag peptide' encoded by the tmRNA and targeted for degradation. The ribosome is freed to recommence translation, which seems to be the essential function of trans-translation. This is SsrA-binding protein from Rhodopseudomonas palustris (strain HaA2).